The chain runs to 698 residues: Epithelial sodium channel subunit alpha (698 aa).

The disordered stretch occupies residues 1–70; it reads MLDHTRAPEL…SAPRQPTEEE (70 aa). At 1–110 the chain is on the cytoplasmic side; sequence MLDHTRAPEL…CSKHNRMKTA (110 aa). The chain crosses the membrane as a helical span at residues 111–131; the sequence is FWAVLWLCTFGMMYWQFALLF. The Extracellular segment spans residues 132-589; sequence EEYLSYPVSL…SQWSLWFGSS (458 aa). 3 cysteine pairs are disulfide-bonded: cysteine 158/cysteine 332, cysteine 256/cysteine 263, and cysteine 309/cysteine 316. Residue asparagine 190 is glycosylated (N-linked (GlcNAc...) asparagine). Residues 200–270 are gating release of inhibition by proteolysis (GRIP); protease-sensitive region that is responsible for the proteolytic activation of the channel; that stretch reads RRRSSRDLLG…SDCFYQTYSS (71 aa). Residues 213–243 form a disordered region; that stretch reads HPLQRLRTPPPPYSGRTARSGSSSVRDNNPQ. Residues 229 to 243 show a composition bias toward polar residues; it reads TARSGSSSVRDNNPQ. An N-linked (GlcNAc...) asparagine glycan is attached at asparagine 259. N-linked (GlcNAc...) asparagine glycans are attached at residues asparagine 320, asparagine 339, and asparagine 424. 7 disulfide bridges follow: cysteine 421–cysteine 506, cysteine 443–cysteine 483, cysteine 443–cysteine 502, cysteine 447–cysteine 498, cysteine 456–cysteine 483, cysteine 456–cysteine 506, and cysteine 458–cysteine 472. The N-linked (GlcNAc...) asparagine glycan is linked to asparagine 538. Residues 590–610 traverse the membrane as a helical segment; the sequence is VLSVVEMAELIFDLLVITLLM. Over 611–698 the chain is Cytoplasmic; the sequence is LLRRFRSRYW…DCSACALAAL (88 aa). The disordered stretch occupies residues 637 to 663; it reads ASSFPSRFCPHPTSPPPSLPQQGMTPP. The PY motif; recruits WW domain-containing proteins and is thereby required for ubiquitination and inhibition of the channel by NEDD4 and NEDD4L signature appears at 669–673; it reads PPPAY.

This sequence belongs to the amiloride-sensitive sodium channel (TC 1.A.6) family. SCNN1A subfamily. In terms of assembly, heterotrimer; containing an alpha/SCNN1A, a beta/SCNN1B and a gamma/SCNN1G subunit. Interacts with WWP1 (via WW domains). Interacts with WWP2 (via WW domains); inhibits the channel. Interacts with BPIFA1; the interaction is indirect via SCNN1B and inhibits the proteolytic processing of SCNN1A and SCNN1G and the activation of ENaC. Interacts with the full-length immature form of PCSK9 (pro-PCSK9). Post-translationally, ubiquitinated. Can be ubiquitinated at multiple sites and undergo monoubiquitination and polyubiquitination. Ubiquitination by NEDD4 or NEDD4L inhibits the ENaC channel through endocytosis, intracellular retention and degradation of its individual subunits. N-glycosylated. In terms of processing, ENaC is activated through the proteolytic maturation of its subunits. Furin cleaves the SCNN1A subunit, which results in a stepwise increase in the open probability of the channel due to the release of an inhibitory tract. BPIFA1, which is recruited by the SCNN1B subunit, prevents the proteolytic activation of ENaC. Detected in kidney, lung and testis (at protein level). In the testis, detected within the seminiferous tubules but not in the interstitial cells (at protein level).

It localises to the apical cell membrane. It is found in the cell projection. Its subcellular location is the cilium. The protein localises to the cytoplasmic granule. The protein resides in the cytoplasm. It localises to the cytoplasmic vesicle. It is found in the secretory vesicle. Its subcellular location is the acrosome. The protein localises to the flagellum. It carries out the reaction Na(+)(in) = Na(+)(out). Its activity is regulated as follows. Originally identified and characterized by its inhibition by the diuretic drug amiloride. This is one of the three pore-forming subunits of the heterotrimeric epithelial sodium channel (ENaC), a critical regulator of sodium balance and fluid homeostasis. ENaC operates in epithelial tissues, where it mediates the electrodiffusion of sodium ions from extracellular fluid through the apical membrane of cells, with water following osmotically. It plays a key role in maintaining sodium homeostasis through electrogenic sodium reabsorption in the kidneys. Additionally, ENaC is essential for airway surface liquid homeostasis, which is crucial for proper mucus clearance. In Rattus norvegicus (Rat), this protein is Epithelial sodium channel subunit alpha.